The chain runs to 62 residues: Putative antitoxin AF_1095 (62 aa).

The protein belongs to the UPF0165 family.

Functionally, possibly the antitoxin component of a type II toxin-antitoxin (TA) system. This chain is Putative antitoxin AF_1095, found in Archaeoglobus fulgidus (strain ATCC 49558 / DSM 4304 / JCM 9628 / NBRC 100126 / VC-16).